We begin with the raw amino-acid sequence, 448 residues long: Chaperone SurA (448 aa).

The N-terminal stretch at 1–27 is a signal peptide; it reads MKKTLRFAAVAAGLVASLITVAPSASA. 2 PpiC domains span residues 185 to 288 and 301 to 399; these read QQDL…RLVD and IVQT…QVLG. Residues 230–249 form a disordered region; sequence LAKSQSEADDAKKGGDLGFK.

It is found in the periplasm. It catalyses the reaction [protein]-peptidylproline (omega=180) = [protein]-peptidylproline (omega=0). Chaperone involved in the correct folding and assembly of outer membrane proteins. Recognizes specific patterns of aromatic residues and the orientation of their side chains, which are found more frequently in integral outer membrane proteins. May act in both early periplasmic and late outer membrane-associated steps of protein maturation. This Burkholderia thailandensis (strain ATCC 700388 / DSM 13276 / CCUG 48851 / CIP 106301 / E264) protein is Chaperone SurA.